Reading from the N-terminus, the 273-residue chain is Putative pyruvate, phosphate dikinase regulatory protein (273 aa).

153 to 160 serves as a coordination point for ADP; it reads GVSRTSKS.

Belongs to the pyruvate, phosphate/water dikinase regulatory protein family. PDRP subfamily.

It catalyses the reaction N(tele)-phospho-L-histidyl/L-threonyl-[pyruvate, phosphate dikinase] + ADP = N(tele)-phospho-L-histidyl/O-phospho-L-threonyl-[pyruvate, phosphate dikinase] + AMP + H(+). The enzyme catalyses N(tele)-phospho-L-histidyl/O-phospho-L-threonyl-[pyruvate, phosphate dikinase] + phosphate + H(+) = N(tele)-phospho-L-histidyl/L-threonyl-[pyruvate, phosphate dikinase] + diphosphate. Its function is as follows. Bifunctional serine/threonine kinase and phosphorylase involved in the regulation of the pyruvate, phosphate dikinase (PPDK) by catalyzing its phosphorylation/dephosphorylation. In Ehrlichia ruminantium (strain Welgevonden), this protein is Putative pyruvate, phosphate dikinase regulatory protein.